Reading from the N-terminus, the 333-residue chain is Taste receptor type 2 member 38 (333 aa).

At 1 to 17 (MLTLTRIRTVSYEVRST) the chain is on the extracellular side. The chain crosses the membrane as a helical span at residues 18–38 (FLFISVLEFAVGFLTNAFVFL). Residues 39-55 (VNFWDVVKRQPLSNSDC) are Cytoplasmic-facing. The chain crosses the membrane as a helical span at residues 56–76 (VLLCLSISRLFLHGLLFLSAI). Residues 77-94 (QLTHFQKLSEPLNHSYQA) lie on the Extracellular side of the membrane. Residues 95 to 115 (IIMLWMIANQANLWLAACLSL) traverse the membrane as a helical segment. Residues 116–142 (LYCSKLIRFSHTFLICLASWVSRKISQ) are Cytoplasmic-facing. A helical transmembrane segment spans residues 143–163 (MLLGIILCSCICTVLCVWCFF). At 164–190 (SRPHFTVTTVLFMNNNTRLNWQIKDLN) the chain is on the extracellular side. Asparagine 178 carries N-linked (GlcNAc...) asparagine glycosylation. A helical membrane pass occupies residues 191-211 (LFYSFLFCYLWSVPPFLLFLV). Over 212–251 (SSGMLTVSLGRHMRTMKVYIRDSRDPSLEAHIKALKSLVS) the chain is Cytoplasmic. Residues 252–272 (FFCFFVISSCAAFISVPLLIL) traverse the membrane as a helical segment. Residues 273 to 276 (WRDK) are Extracellular-facing. The helical transmembrane segment at 277–297 (IGVMVCVGIMAACPSGHAAVL) threads the bilayer. The Cytoplasmic segment spans residues 298 to 333 (ISGNAKLRRAVTTILLWAQSSLKVRADHKADSRTPC).

Belongs to the G-protein coupled receptor T2R family.

It is found in the membrane. Its function is as follows. Receptor that may play a role in the perception of bitterness and is gustducin-linked. May play a role in sensing the chemical composition of the gastrointestinal content. The activity of this receptor may stimulate alpha gustducin, mediate PLC-beta-2 activation and lead to the gating of TRPM5. The sequence is that of Taste receptor type 2 member 38 (TAS2R38) from Gorilla gorilla gorilla (Western lowland gorilla).